A 305-amino-acid chain; its full sequence is Oxygen-dependent coproporphyrinogen-III oxidase (305 aa).

Ser-93 contacts substrate. Residues His-97 and His-107 each coordinate a divalent metal cation. His-107 serves as the catalytic Proton donor. 109 to 111 (NVR) lines the substrate pocket. A divalent metal cation-binding residues include His-146 and His-176. The important for dimerization stretch occupies residues 241 to 276 (YVEFNLVYDRGTLFGLQSGGRTESILMSLPPQVRWG). 259 to 261 (GGR) contacts substrate.

It belongs to the aerobic coproporphyrinogen-III oxidase family. Homodimer. It depends on a divalent metal cation as a cofactor.

The protein resides in the cytoplasm. It carries out the reaction coproporphyrinogen III + O2 + 2 H(+) = protoporphyrinogen IX + 2 CO2 + 2 H2O. Its pathway is porphyrin-containing compound metabolism; protoporphyrin-IX biosynthesis; protoporphyrinogen-IX from coproporphyrinogen-III (O2 route): step 1/1. Its function is as follows. Involved in the heme biosynthesis. Catalyzes the aerobic oxidative decarboxylation of propionate groups of rings A and B of coproporphyrinogen-III to yield the vinyl groups in protoporphyrinogen-IX. This Pseudomonas fluorescens (strain ATCC BAA-477 / NRRL B-23932 / Pf-5) protein is Oxygen-dependent coproporphyrinogen-III oxidase.